A 123-amino-acid chain; its full sequence is Nitrogen fixation nifHD1 region GlnB-like protein 2 (123 aa).

This sequence belongs to the P(II) protein family.

Could be involved in the regulation of nitrogen fixation. The polypeptide is Nitrogen fixation nifHD1 region GlnB-like protein 2 (glnBB) (Methanosarcina barkeri).